Reading from the N-terminus, the 307-residue chain is Nucleotide-binding protein Acid345_3782 (307 aa).

31–38 (GLSGSGKA) is a binding site for ATP. A GTP-binding site is contributed by 81–84 (DIRE).

Belongs to the RapZ-like family.

Functionally, displays ATPase and GTPase activities. The protein is Nucleotide-binding protein Acid345_3782 of Koribacter versatilis (strain Ellin345).